Here is a 224-residue protein sequence, read N- to C-terminus: MKFVAFERAKQGTGASRRLRISGKTPGIVYGGEGKPQLIELDHNALWHALKKEAFHSSILEMELGGATSKVLLRDVQYHPFRQLVQHIDFQRVDAKTRMHMKVPLHYKGEEESDAVKLDHNLVTHVMTELEVSCLPADLPEFIEVDLSGLKKNATLHVNDIKLPKGVKFVSHGKLNPVIVSAVPPLVSEEPAPAAEGAAPAEGAAAAAAGGKPAAKTAKPAAKK.

A disordered region spans residues 190–224 (EPAPAAEGAAPAEGAAAAAAGGKPAAKTAKPAAKK).

The protein belongs to the bacterial ribosomal protein bL25 family. CTC subfamily. In terms of assembly, part of the 50S ribosomal subunit; part of the 5S rRNA/L5/L18/L25 subcomplex. Contacts the 5S rRNA. Binds to the 5S rRNA independently of L5 and L18.

Functionally, this is one of the proteins that binds to the 5S RNA in the ribosome where it forms part of the central protuberance. The chain is Large ribosomal subunit protein bL25 from Variovorax paradoxus (strain S110).